The sequence spans 114 residues: Large ribosomal subunit protein uL18 (114 aa).

It belongs to the universal ribosomal protein uL18 family. Part of the 50S ribosomal subunit; part of the 5S rRNA/L5/L18/L25 subcomplex. Contacts the 5S and 23S rRNAs.

This is one of the proteins that bind and probably mediate the attachment of the 5S RNA into the large ribosomal subunit, where it forms part of the central protuberance. The polypeptide is Large ribosomal subunit protein uL18 (Porphyromonas gingivalis (strain ATCC 33277 / DSM 20709 / CIP 103683 / JCM 12257 / NCTC 11834 / 2561)).